We begin with the raw amino-acid sequence, 432 residues long: MVILSLYLAAFTLRLLLAGLAHKHCRDAPDGAACHYFTSAERSEWRTEDPQFLAEVLFAVTSMLSFTRLASILPAHESLGTLQISMGRMIDDMIRFMFILMIILTAFLCGLNNIYVPYQETERLGNFNETFQFLFWTMFGMEEHSVVDMPQFLVPEFVGRALYGIFTIVMVIVLLNMLIAMITNSFQKIEDAADVEWKFARSKLYLSYFREGLTLPVPFNILPSPKAIFYLLRRVFRFICCCHFCCKTKKPDYPPIPTFANPGAGAGPGEGERGSYRLRVIKALVQRYIETAQREFEETRRKDLGNRLTELTKTVSRLQSEVAGVQRAVVEAGPRRPPGGASVLSRYITRVRNSFQNLGPPIPETPELTVPATVGTQESSEIGLPDAGGAQAPASGESGPSSPAHVLVHREQESEGAGDLPQEADLGAKEGT.

Helical transmembrane passes span 1–21 (MVIL…AGLA), 52–72 (FLAE…LASI), 96–116 (FMFI…NIYV), and 162–182 (LYGI…IAMI). The disordered stretch occupies residues 356-432 (QNLGPPIPET…EADLGAKEGT (77 aa)). Residues 387-404 (AGGAQAPASGESGPSSPA) are compositionally biased toward low complexity.

The protein belongs to the transient receptor (TC 1.A.4) family. STrpC subfamily. TRPC2 sub-subfamily.

It localises to the membrane. Its function is as follows. Thought to form a receptor-activated calcium permeant cation channel. The polypeptide is Short transient receptor potential channel 2 homolog (TRPC2) (Bos taurus (Bovine)).